The primary structure comprises 333 residues: Ornithine carbamoyltransferase (333 aa).

Carbamoyl phosphate-binding positions include 56-59, glutamine 83, arginine 107, and 134-137; these read STRT and HPTQ. L-ornithine-binding positions include asparagine 167, aspartate 231, and 235-236; that span reads SM. Residues 273 to 274 and arginine 318 contribute to the carbamoyl phosphate site; that span reads CL.

It belongs to the aspartate/ornithine carbamoyltransferase superfamily. OTCase family.

It localises to the cytoplasm. It catalyses the reaction carbamoyl phosphate + L-ornithine = L-citrulline + phosphate + H(+). It functions in the pathway amino-acid biosynthesis; L-arginine biosynthesis; L-arginine from L-ornithine and carbamoyl phosphate: step 1/3. Reversibly catalyzes the transfer of the carbamoyl group from carbamoyl phosphate (CP) to the N(epsilon) atom of ornithine (ORN) to produce L-citrulline. The chain is Ornithine carbamoyltransferase (argF) from Staphylococcus aureus (strain COL).